The sequence spans 515 residues: Maturase K (515 aa).

Belongs to the intron maturase 2 family. MatK subfamily.

The protein localises to the plastid. It is found in the chloroplast. Its function is as follows. Usually encoded in the trnK tRNA gene intron. Probably assists in splicing its own and other chloroplast group II introns. The protein is Maturase K of Pinus yunnanensis (Yunnan pine).